We begin with the raw amino-acid sequence, 681 residues long: Chaperone protein htpG (681 aa).

Positions 1 to 326 are a; substrate-binding; that stretch reads MQKGNIGVTT…SPDIPLNVSR (326 aa). The interval 327 to 545 is b; the sequence is SYLQSDSNVK…YMRRMKEMAN (219 aa). A c region spans residues 546 to 681; it reads IQAGMSFYGE…NFVKRSIELI (136 aa).

The protein belongs to the heat shock protein 90 family. Homodimer.

It is found in the cytoplasm. In terms of biological role, molecular chaperone. Has ATPase activity. The polypeptide is Chaperone protein htpG (Bacteroides fragilis (strain YCH46)).